We begin with the raw amino-acid sequence, 838 residues long: Rho GTPase-activating protein 12 (838 aa).

Residues 10 to 72 (AGQAYIEVEY…PAQYVKEVTR (63 aa)) form the SH3 domain. Composition is skewed to polar residues over residues 155–172 (GKFN…QNRT) and 189–198 (TSFSQEQSCD). Residues 155-239 (GKFNSDSHSP…PPNQGRPDSP (85 aa)) form a disordered region. Ser163 carries the phosphoserine modification. A phosphoserine mark is found at Ser199, Ser211, and Ser213. A phosphothreonine mark is found at Thr228 and Thr229. Phosphoserine is present on Ser238. Tyr241 bears the Phosphotyrosine mark. The WW 1 domain occupies 263–296 (IQVNGEWETHKDSSGRCYYYNRTTQERTWKPPRW). The span at 291–302 (WKPPRWARDVST) shows a compositional bias: basic and acidic residues. The disordered stretch occupies residues 291 to 346 (WKPPRWARDVSTSRDFQSPGEQEPLSSEENYHSSCFSQSDSQCGSPPRGWSEELDE). A compositionally biased stretch (polar residues) spans 303–334 (SRDFQSPGEQEPLSSEENYHSSCFSQSDSQCG). The region spanning 355 to 388 (DYTKEKWLKHVDDQGRQYYYSADGSRSEWELPKY) is the WW 2 domain. The tract at residues 425–456 (DSNDKDSPTTTKLCLPENESPPTSSKHQDPGQ) is disordered. In terms of domain architecture, PH spans 466 to 567 (KITENGKKVR…WFKVLSSTIN (102 aa)). A compositionally biased stretch (acidic residues) spans 572–582 (EADEAAEEETP). Residues 572–620 (EADEAAEEETPDSPGVEKHDKEKDQKELKKLRSMKGSSMDSSEQKKTKK) are disordered. The residue at position 584 (Ser584) is a Phosphoserine. Positions 586-601 (GVEKHDKEKDQKELKK) are enriched in basic and acidic residues. Positions 648-836 (SNLANLCQRE…LILLELSTVF (189 aa)) constitute a Rho-GAP domain.

Its function is as follows. GTPase activator for the Rho-type GTPases by converting them to an inactive GDP-bound state. The polypeptide is Rho GTPase-activating protein 12 (Arhgap12) (Mus musculus (Mouse)).